A 188-amino-acid polypeptide reads, in one-letter code: Large ribosomal subunit protein bL32m (188 aa).

Cysteine 110, cysteine 113, cysteine 123, and cysteine 126 together coordinate Zn(2+). A disordered region spans residues threonine 164 to asparagine 188. Residues aspartate 169 to arginine 181 show a composition bias toward basic and acidic residues.

Belongs to the bacterial ribosomal protein bL32 family. In terms of assembly, component of the mitochondrial large ribosomal subunit (mt-LSU). Mature mammalian 55S mitochondrial ribosomes consist of a small (28S) and a large (39S) subunit. The 28S small subunit contains a 12S ribosomal RNA (12S mt-rRNA) and 30 different proteins. The 39S large subunit contains a 16S rRNA (16S mt-rRNA), a copy of mitochondrial valine transfer RNA (mt-tRNA(Val)), which plays an integral structural role, and 52 different proteins. bL32m has a zinc binding site. Post-translationally, MRPL32 precursor is processed by the m-AAA protease (composed of AFG3L2 and SPG7), which cleaves the N-terminal transit peptide. Cleavage by the m-AAA protease takes place prior to assembly into the large subunit, an essential step for mitochondrial ribosome (mitoribosome) assembly. Proper processing by the m-AAA protease is dependent on the zinc-binding region within the tightly folded C-terminal domain of MRPL32: zinc-dependent folding halts degradation initiated from the N-terminus and triggers the release of mature MRPL32.

The protein localises to the mitochondrion. Its function is as follows. Component of the mitochondrial large ribosomal subunit (mt-LSU). The mitochondrial ribosome (mitoribosome) is a large ribonucleoprotein complex responsible for the synthesis of proteins inside mitochondria. The protein is Large ribosomal subunit protein bL32m (MRPL32) of Homo sapiens (Human).